Reading from the N-terminus, the 156-residue chain is Large ribosomal subunit protein uL15 (156 aa).

The interval 1-44 is disordered; that stretch reads MKLNELRDNPGASPKRTRVGRGPGSGKGKMGGRGIKGQKSRSGV. Gly residues predominate over residues 21-35; the sequence is RGPGSGKGKMGGRGI.

The protein belongs to the universal ribosomal protein uL15 family. As to quaternary structure, part of the 50S ribosomal subunit.

In terms of biological role, binds to the 23S rRNA. The sequence is that of Large ribosomal subunit protein uL15 from Ruegeria sp. (strain TM1040) (Silicibacter sp.).